Consider the following 267-residue polypeptide: Tryptophan synthase alpha chain (267 aa).

Active-site proton acceptor residues include glutamate 47 and aspartate 58.

The protein belongs to the TrpA family. Tetramer of two alpha and two beta chains.

It catalyses the reaction (1S,2R)-1-C-(indol-3-yl)glycerol 3-phosphate + L-serine = D-glyceraldehyde 3-phosphate + L-tryptophan + H2O. The protein operates within amino-acid biosynthesis; L-tryptophan biosynthesis; L-tryptophan from chorismate: step 5/5. Its function is as follows. The alpha subunit is responsible for the aldol cleavage of indoleglycerol phosphate to indole and glyceraldehyde 3-phosphate. This chain is Tryptophan synthase alpha chain, found in Chlorobium limicola (strain DSM 245 / NBRC 103803 / 6330).